The sequence spans 544 residues: Chaperonin GroEL (544 aa).

ATP is bound by residues 29–32 (TLGP), 86–90 (DGTTT), Gly-413, 478–480 (NAA), and Asp-494.

It belongs to the chaperonin (HSP60) family. In terms of assembly, forms a cylinder of 14 subunits composed of two heptameric rings stacked back-to-back. Interacts with the co-chaperonin GroES.

It localises to the cytoplasm. It catalyses the reaction ATP + H2O + a folded polypeptide = ADP + phosphate + an unfolded polypeptide.. Functionally, together with its co-chaperonin GroES, plays an essential role in assisting protein folding. The GroEL-GroES system forms a nano-cage that allows encapsulation of the non-native substrate proteins and provides a physical environment optimized to promote and accelerate protein folding. This Lysinibacillus sphaericus (strain C3-41) protein is Chaperonin GroEL.